A 238-amino-acid chain; its full sequence is Bacterial microcompartment shell protein PduB (238 aa).

BMC circularly permuted domains are found at residues 14-125 (FVGA…VYNA) and 126-225 (KAGH…LSQF). Cys158 and Cys197 are oxidised to a cystine.

Belongs to the EutL/PduB family. Homotrimerizes to form a pseudohexamer with a central pore 7.5 Angstroms wide and 22 Angstroms long; the pore channel in the crystal binds up to 4 glycerol molecules. A disulfide bond forms in the pore, it is not clear if this is an artifact. The trimers pack into an array.

It is found in the bacterial microcompartment. Its pathway is polyol metabolism; 1,2-propanediol degradation. Its function is as follows. One of the major shell proteins of the bacterial microcompartment (BMC) dedicated to 1,2-propanediol (1,2-PD) degradation. Probably involved in a propanediol fermentation/reuterin formation pathway. The sequence is that of Bacterial microcompartment shell protein PduB from Limosilactobacillus reuteri (strain DSM 20016) (Lactobacillus reuteri).